The sequence spans 229 residues: DNA mismatch repair protein MutH (229 aa).

The protein belongs to the MutH family.

It is found in the cytoplasm. Functionally, sequence-specific endonuclease that cleaves unmethylated GATC sequences. It is involved in DNA mismatch repair. The chain is DNA mismatch repair protein MutH from Escherichia coli (strain K12 / MC4100 / BW2952).